The following is a 452-amino-acid chain: Zinc finger protein 672 (452 aa).

4 C2H2-type zinc fingers span residues 14–36 (YSCS…ERAH), 42–64 (FRCL…RRTH), 70–92 (YICS…LGAH), and 99–122 (CPCR…RRQH). The segment at 128-150 (RRCPLCARTFRQSALLFHQARAH) adopts a C2H2-type 5; degenerate zinc-finger fold. 9 C2H2-type zinc fingers span residues 163–185 (HRCA…ARIH), 199–221 (HQCG…LQTH), 227–249 (FKCP…QRTH), 255–277 (YACG…RRSH), 283–305 (HACA…QRIH), 311–333 (FACP…RRTH), 339–361 (YRCE…RRNH), 367–389 (HKCP…RKTH), and 395–417 (AECA…QRAH).

This sequence belongs to the krueppel C2H2-type zinc-finger protein family.

Its subcellular location is the nucleus. Its function is as follows. May be involved in transcriptional regulation. This is Zinc finger protein 672 from Homo sapiens (Human).